We begin with the raw amino-acid sequence, 199 residues long: MATIVAWESRNLQLQGGGGGHGGGGGGGGGERREYMFEKVVTPSDVGKLNRLVVPKHYAEKYFPLGPAARTSPAGTVLCFEDARGGDSTWRFRYSYWSSSQSYVITKGWSRYVRDKRLAAGDTVSFCRAGARLFIDCRKRAASVSSSSLVPPALIKVQLPPSRPVVDEEEAACGRRCLRLFGVDLQLRADASPALDLQL.

The interval Q13–R32 is disordered. A compositionally biased stretch (gly residues) spans Q15–G29. Positions F37–A141 form a DNA-binding region, TF-B3.

It is found in the nucleus. The protein is B3 domain-containing protein Os06g0107800 of Oryza sativa subsp. japonica (Rice).